The chain runs to 330 residues: MSQLKVDNGPLSHVANSGPISIGAYCFSSIMMTVTNKFVVNLKGFNMNFVMLFVQAAVCVNLLFFLRLLGYAKFRPLNRTDAKNWFPITIFLVLMIYTSSKSLQYLAVPIYTIFKNLTIILIAYGEVLFFGGSVTAMELSSFLLMVLSSVVATLGDQQALKKTADAGASLFNIGYMWMFINCLSSAAFVLVMRKRIKLTNFKDFDTMFYNNILSMPVLLALSFLMEDWSTENLTKNLSRDSVTAMIISGMTAVCISYCSGWCVRVTSSTTYSMVGALNKLPIALSGLIFFDAPKNFLSIFSIFLGFLSGIVYAVAKQKKQQNPQPSAPIK.

Residues 1–13 (MSQLKVDNGPLSH) lie on the Cytoplasmic side of the membrane. A helical transmembrane segment spans residues 14-34 (VANSGPISIGAYCFSSIMMTV). Topologically, residues 35 to 48 (TNKFVVNLKGFNMN) are lumenal. The helical transmembrane segment at 49–69 (FVMLFVQAAVCVNLLFFLRLL) threads the bilayer. Residues 70–81 (GYAKFRPLNRTD) lie on the Cytoplasmic side of the membrane. Residues 82–98 (AKNWFPITIFLVLMIYT) traverse the membrane as a helical segment. The Lumenal portion of the chain corresponds to 99 to 104 (SSKSLQ). Residues 105–124 (YLAVPIYTIFKNLTIILIAY) form a helical membrane-spanning segment. The Cytoplasmic portion of the chain corresponds to 125–138 (GEVLFFGGSVTAME). The helical transmembrane segment at 139-155 (LSSFLLMVLSSVVATLG) threads the bilayer. Topologically, residues 156-170 (DQQALKKTADAGASL) are lumenal. The helical transmembrane segment at 171–191 (FNIGYMWMFINCLSSAAFVLV) threads the bilayer. Residues 192-203 (MRKRIKLTNFKD) lie on the Cytoplasmic side of the membrane. The helical transmembrane segment at 204 to 224 (FDTMFYNNILSMPVLLALSFL) threads the bilayer. Over 225-241 (MEDWSTENLTKNLSRDS) the chain is Lumenal. A helical transmembrane segment spans residues 242-262 (VTAMIISGMTAVCISYCSGWC). Residues 263-269 (VRVTSST) lie on the Cytoplasmic side of the membrane. Residues 270-290 (TYSMVGALNKLPIALSGLIFF) form a helical membrane-spanning segment. Residues 291 to 294 (DAPK) are Lumenal-facing. The helical transmembrane segment at 295-315 (NFLSIFSIFLGFLSGIVYAVA) threads the bilayer. At 316-330 (KQKKQQNPQPSAPIK) the chain is on the cytoplasmic side.

Belongs to the TPT transporter family. SLC35D subfamily. As to quaternary structure, homooligomer.

The protein resides in the golgi apparatus membrane. It is found in the cytoplasmic vesicle membrane. It localises to the endoplasmic reticulum membrane. In terms of biological role, involved in the import of GDP-mannose from the cytoplasm into the Golgi lumen. This chain is GDP-mannose transporter (VRG4), found in Kluyveromyces lactis (strain ATCC 8585 / CBS 2359 / DSM 70799 / NBRC 1267 / NRRL Y-1140 / WM37) (Yeast).